A 313-amino-acid polypeptide reads, in one-letter code: Tetraspanning orphan receptor (313 aa).

The Extracellular segment spans residues 1–54 (PQCESETNFHYDIPPGYKDDVLVDVNNMSPSLVSDTQKHERGSHEVKIKHFSPY). A helical membrane pass occupies residues 55-75 (IAVCVTTFSLAFCCFMVHAAI). The Cytoplasmic segment spans residues 76–82 (TRQPTHL). Residues 83–103 (LPFFFIQVFDLIICLIHILGF) form a helical membrane-spanning segment. Residues 104 to 129 (MSSTSDIRLVIHTKTGPIYIKSTGLT) lie on the Extracellular side of the membrane. A helical membrane pass occupies residues 130 to 150 (FIILSISCMMLAFKAYCLGMV). Topologically, residues 151–313 (WDCYKYLMLN…NASSNAHSSC (163 aa)) are cytoplasmic. Disordered stretches follow at residues 192 to 218 (NNSI…YDPA) and 279 to 313 (NTNT…HSSC). The span at 279 to 295 (NTNTSTTTSVISPLTTT) shows a compositional bias: low complexity. Polar residues predominate over residues 301–313 (QINNASSNAHSSC).

As to quaternary structure, interacts (via N-terminal extracellular domain) with human C2a. Post-translationally, phosphorylated on tyrosine residues.

It localises to the cell membrane. Functionally, cell surface receptor that binds to human complement C2a protein. This results in inhibition of the classical and lectin pathways of complement activation, probably due to interference with binding of C2a to C4b and interference with cleavage by C1 or MASP2 such that C3 convertase cannot be formed. This infers resistance to complement-mediated cell lysis, allowing parasite survival and infection. In Schistosoma haematobium (Blood fluke), this protein is Tetraspanning orphan receptor.